The sequence spans 1502 residues: Nucleoporin NUP170 (1502 aa).

The segment at 1-31 (MFQSFFHNNGPAAAGETFSDSRSYPLTNHQE) is disordered. Over residues 18 to 30 (FSDSRSYPLTNHQ) the composition is skewed to polar residues. The tract at residues 233–261 (LISTTMELFMFAISLDKATNELSVFNTHL) is leucine-zipper. Phosphoserine is present on Ser-1247.

Belongs to the non-repetitive/WGA-negative nucleoporin family. Component of the nuclear pore complex (NPC). NPC constitutes the exclusive means of nucleocytoplasmic transport. NPCs allow the passive diffusion of ions and small molecules and the active, nuclear transport receptor-mediated bidirectional transport of macromolecules such as proteins, RNAs, ribonucleoparticles (RNPs), and ribosomal subunits across the nuclear envelope. Due to its 8-fold rotational symmetry, all subunits are present with 8 copies or multiples thereof. During mitosis NUP53 changes its binding partner within the NPC from NUP170 to NIC96, exposing a high affinity binding site for the karyopherin PSE1, and retaining it in the NPC.

The protein resides in the nucleus. Its subcellular location is the nuclear pore complex. The protein localises to the nucleus membrane. Functions as a component of the nuclear pore complex (NPC). NPC components, collectively referred to as nucleoporins (NUPs), can play the role of both NPC structural components and of docking or interaction partners for transiently associated nuclear transport factors. NUP170 probably plays an important role in NPC assembly and organization. In addition it is required for chromosome transmission fidelity. The chain is Nucleoporin NUP170 (NUP170) from Saccharomyces cerevisiae (strain ATCC 204508 / S288c) (Baker's yeast).